We begin with the raw amino-acid sequence, 421 residues long: Medium-chain specific acyl-CoA dehydrogenase, mitochondrial (421 aa).

The N-terminal 25 residues, 1-25, are a transit peptide targeting the mitochondrion; it reads MAAAFGRCCRVLRSISRFHWRSQHT. Lys69 carries the N6-acetyllysine; alternate modification. Lys69 is subject to N6-succinyllysine; alternate. Residue 158-167 coordinates FAD; it reads YCVTEPGAGS. An octanoyl-CoA-binding site is contributed by Ser167. An N6-succinyllysine modification is found at Lys179. Position 191–193 (191–193) interacts with FAD; it reads WIT. 4 positions are modified to N6-acetyllysine; alternate: Lys212, Lys217, Lys259, and Lys271. An N6-succinyllysine; alternate mark is found at Lys212, Lys217, Lys259, and Lys271. Residue Asp278 coordinates octanoyl-CoA. The residue at position 279 (Lys279) is an N6-acetyllysine. Residue Arg281 coordinates octanoyl-CoA. N6-acetyllysine is present on Lys301. Residues 306–308 and 316–317 contribute to the FAD site; these read RKT and HQ. Octanoyl-CoA-binding residues include Arg349 and Thr351. Thr351 carries the post-translational modification Phosphothreonine. 374 to 378 serves as a coordination point for FAD; the sequence is QIFGG. Position 401 (Glu401) interacts with octanoyl-CoA. The Proton acceptor role is filled by Glu401. Residue 402–405 participates in FAD binding; the sequence is GTSQ.

Belongs to the acyl-CoA dehydrogenase family. As to quaternary structure, homotetramer. Interacts with the heterodimeric electron transfer flavoprotein ETF. FAD is required as a cofactor. Acetylated. Could occur at proximity of the cofactor-binding sites and reduce the catalytic activity. Could be deacetylated by SIRT3.

It is found in the mitochondrion matrix. It carries out the reaction a medium-chain 2,3-saturated fatty acyl-CoA + oxidized [electron-transfer flavoprotein] + H(+) = a medium-chain (2E)-enoyl-CoA + reduced [electron-transfer flavoprotein]. The catalysed reaction is pentanoyl-CoA + oxidized [electron-transfer flavoprotein] + H(+) = (2E)-pentenoyl-CoA + reduced [electron-transfer flavoprotein]. The enzyme catalyses hexanoyl-CoA + oxidized [electron-transfer flavoprotein] + H(+) = (2E)-hexenoyl-CoA + reduced [electron-transfer flavoprotein]. It catalyses the reaction octanoyl-CoA + oxidized [electron-transfer flavoprotein] + H(+) = (2E)-octenoyl-CoA + reduced [electron-transfer flavoprotein]. It carries out the reaction decanoyl-CoA + oxidized [electron-transfer flavoprotein] + H(+) = (2E)-decenoyl-CoA + reduced [electron-transfer flavoprotein]. The catalysed reaction is dodecanoyl-CoA + oxidized [electron-transfer flavoprotein] + H(+) = (2E)-dodecenoyl-CoA + reduced [electron-transfer flavoprotein]. The enzyme catalyses tetradecanoyl-CoA + oxidized [electron-transfer flavoprotein] + H(+) = (2E)-tetradecenoyl-CoA + reduced [electron-transfer flavoprotein]. It catalyses the reaction oxidized [electron-transfer flavoprotein] + hexadecanoyl-CoA + H(+) = (2E)-hexadecenoyl-CoA + reduced [electron-transfer flavoprotein]. The protein operates within lipid metabolism; mitochondrial fatty acid beta-oxidation. In terms of biological role, medium-chain specific acyl-CoA dehydrogenase is one of the acyl-CoA dehydrogenases that catalyze the first step of mitochondrial fatty acid beta-oxidation, an aerobic process breaking down fatty acids into acetyl-CoA and allowing the production of energy from fats. The first step of fatty acid beta-oxidation consists in the removal of one hydrogen from C-2 and C-3 of the straight-chain fatty acyl-CoA thioester, resulting in the formation of trans-2-enoyl-CoA. Electron transfer flavoprotein (ETF) is the electron acceptor that transfers electrons to the main mitochondrial respiratory chain via ETF-ubiquinone oxidoreductase (ETF dehydrogenase). Among the different mitochondrial acyl-CoA dehydrogenases, medium-chain specific acyl-CoA dehydrogenase acts specifically on acyl-CoAs with saturated 6 to 12 carbons long primary chains. This is Medium-chain specific acyl-CoA dehydrogenase, mitochondrial from Macaca fascicularis (Crab-eating macaque).